The following is a 261-amino-acid chain: 3-hydroxyacyl-CoA dehydrogenase type-2 (261 aa).

At Ala2 the chain carries N-acetylalanine. NAD(+) is bound by residues Ser20, Leu22, and Asp41. Lys53 is subject to N6-acetyllysine; alternate. The residue at position 53 (Lys53) is an N6-succinyllysine; alternate. Residues Asp64 and Val65 each coordinate NAD(+). Residue Lys69 is modified to N6-acetyllysine. Cys91 is an NAD(+) binding site. An N6-acetyllysine mark is found at Lys99 and Lys105. Ser155 provides a ligand contact to substrate. NAD(+)-binding residues include Tyr168, Lys172, Phe201, and Thr203. Tyr168 acts as the Proton acceptor in catalysis. At Lys212 the chain carries N6-acetyllysine; alternate. An N6-succinyllysine; alternate modification is found at Lys212.

Belongs to the short-chain dehydrogenases/reductases (SDR) family. Homotetramer. Component of mitochondrial ribonuclease P, a complex composed of TRMT10C/MRPP1, HSD17B10/MRPP2 and PRORP/MRPP3. Interacts with TRMT10C/MRPP1; forming the MRPP1-MRPP2 subcomplex of the mitochondrial ribonuclease P complex. In terms of tissue distribution, ubiquitously expressed in normal tissues but is overexpressed in neurons affected in AD.

It is found in the mitochondrion. The protein localises to the mitochondrion matrix. Its subcellular location is the mitochondrion nucleoid. It carries out the reaction a (3S)-3-hydroxyacyl-CoA + NAD(+) = a 3-oxoacyl-CoA + NADH + H(+). It catalyses the reaction (2S,3S)-3-hydroxy-2-methylbutanoyl-CoA + NAD(+) = 2-methyl-3-oxobutanoyl-CoA + NADH + H(+). The enzyme catalyses testosterone + NAD(+) = androst-4-ene-3,17-dione + NADH + H(+). The catalysed reaction is 5alpha-androstane-3alpha,17beta-diol + NAD(+) = 17beta-hydroxy-5alpha-androstan-3-one + NADH + H(+). It carries out the reaction 17beta-estradiol + NAD(+) = estrone + NADH + H(+). It catalyses the reaction cholate + NAD(+) = 3alpha,12alpha-dihydroxy-7-oxo-5beta-cholanate + NADH + H(+). The enzyme catalyses (3S)-3-hydroxybutanoyl-CoA + NAD(+) = acetoacetyl-CoA + NADH + H(+). The catalysed reaction is (3S)-hydroxyoctanoyl-CoA + NAD(+) = 3-oxooctanoyl-CoA + NADH + H(+). It carries out the reaction (3S)-hydroxyhexadecanoyl-CoA + NAD(+) = 3-oxohexadecanoyl-CoA + NADH + H(+). It catalyses the reaction 17beta-hydroxy-5alpha-androstan-3-one + NAD(+) = 5alpha-androstan-3,17-dione + NADH + H(+). The enzyme catalyses 5alpha-pregnan-20beta-ol-3-one + NAD(+) = 5alpha-pregnane-3,20-dione + NADH + H(+). The catalysed reaction is 3alpha-hydroxy-5alpha-pregnan-20-one + NAD(+) = 5alpha-pregnane-3,20-dione + NADH + H(+). It carries out the reaction cortisone + NAD(+) = 17alpha-hydroxypregn-4-en-3,11,20-trione-21-al + NADH + H(+). It catalyses the reaction 11-dehydrocorticosterone + NAD(+) = pregn-4-ene-3,11,20,21-tetraone + NADH + H(+). The enzyme catalyses cortisol + NAD(+) = 11beta,17alpha-dihydroxypregn-4-ene-3,20,21-trione + NADH + H(+). The catalysed reaction is chenodeoxycholate + NAD(+) = 7-oxolithocholate + NADH + H(+). It carries out the reaction ursodeoxycholate + NAD(+) = 7-oxolithocholate + NADH + H(+). It catalyses the reaction 3beta,7beta-dihydroxy-5beta-cholan-24-oate + NAD(+) = 3beta-hydroxy-7-oxo-5beta-cholan-24-oate + NADH + H(+). It participates in amino-acid degradation; L-isoleucine degradation. It functions in the pathway lipid metabolism; fatty acid beta-oxidation. Its pathway is steroid metabolism. The protein operates within lipid metabolism; bile acid biosynthesis. Its activity is regulated as follows. The phospholipase C-like activity toward cardiolipin is inhibited by amyloid-beta peptide. Mitochondrial dehydrogenase involved in pathways of fatty acid, branched-chain amino acid and steroid metabolism. Acts as (S)-3-hydroxyacyl-CoA dehydrogenase in mitochondrial fatty acid beta-oxidation, a major degradation pathway of fatty acids. Catalyzes the third step in the beta-oxidation cycle, namely the reversible conversion of (S)-3-hydroxyacyl-CoA to 3-ketoacyl-CoA. Preferentially accepts straight medium- and short-chain acyl-CoA substrates with highest efficiency for (3S)-hydroxybutanoyl-CoA. Acts as 3-hydroxy-2-methylbutyryl-CoA dehydrogenase in branched-chain amino acid catabolic pathway. Catalyzes the oxidation of 3-hydroxy-2-methylbutanoyl-CoA into 2-methyl-3-oxobutanoyl-CoA, a step in isoleucine degradation pathway. Has hydroxysteroid dehydrogenase activity toward steroid hormones and bile acids. Catalyzes the oxidation of 3alpha-, 17beta-, 20beta- and 21-hydroxysteroids and 7alpha- and 7beta-hydroxy bile acids. Oxidizes allopregnanolone/brexanolone at the 3alpha-hydroxyl group, which is known to be critical for the activation of gamma-aminobutyric acid receptors (GABAARs) chloride channel. Has phospholipase C-like activity toward cardiolipin and its oxidized species. Likely oxidizes the 2'-hydroxyl in the head group of cardiolipin to form a ketone intermediate that undergoes nucleophilic attack by water and fragments into diacylglycerol, dihydroxyacetone and orthophosphate. Has higher affinity for cardiolipin with oxidized fatty acids and may degrade these species during the oxidative stress response to protect cells from apoptosis. By interacting with intracellular amyloid-beta, it may contribute to the neuronal dysfunction associated with Alzheimer disease (AD). Essential for structural and functional integrity of mitochondria. In terms of biological role, in addition to mitochondrial dehydrogenase activity, moonlights as a component of mitochondrial ribonuclease P, a complex that cleaves tRNA molecules in their 5'-ends. Together with TRMT10C/MRPP1, forms a subcomplex of the mitochondrial ribonuclease P, named MRPP1-MRPP2 subcomplex, which displays functions that are independent of the ribonuclease P activity. The MRPP1-MRPP2 subcomplex catalyzes the formation of N(1)-methylguanine and N(1)-methyladenine at position 9 (m1G9 and m1A9, respectively) in tRNAs; HSD17B10/MRPP2 acting as a non-catalytic subunit. The MRPP1-MRPP2 subcomplex also acts as a tRNA maturation platform: following 5'-end cleavage by the mitochondrial ribonuclease P complex, the MRPP1-MRPP2 subcomplex enhances the efficiency of 3'-processing catalyzed by ELAC2, retains the tRNA product after ELAC2 processing and presents the nascent tRNA to the mitochondrial CCA tRNA nucleotidyltransferase TRNT1 enzyme. Associates with mitochondrial DNA complexes at the nucleoids to initiate RNA processing and ribosome assembly. The protein is 3-hydroxyacyl-CoA dehydrogenase type-2 (HSD17B10) of Homo sapiens (Human).